Reading from the N-terminus, the 586-residue chain is 2-succinyl-5-enolpyruvyl-6-hydroxy-3-cyclohexene-1-carboxylate synthase (586 aa).

The protein belongs to the TPP enzyme family. MenD subfamily. In terms of assembly, homodimer. The cofactor is Mg(2+). It depends on Mn(2+) as a cofactor. Thiamine diphosphate is required as a cofactor.

It carries out the reaction isochorismate + 2-oxoglutarate + H(+) = 5-enolpyruvoyl-6-hydroxy-2-succinyl-cyclohex-3-ene-1-carboxylate + CO2. It functions in the pathway quinol/quinone metabolism; 1,4-dihydroxy-2-naphthoate biosynthesis; 1,4-dihydroxy-2-naphthoate from chorismate: step 2/7. The protein operates within quinol/quinone metabolism; menaquinone biosynthesis. Its function is as follows. Catalyzes the thiamine diphosphate-dependent decarboxylation of 2-oxoglutarate and the subsequent addition of the resulting succinic semialdehyde-thiamine pyrophosphate anion to isochorismate to yield 2-succinyl-5-enolpyruvyl-6-hydroxy-3-cyclohexene-1-carboxylate (SEPHCHC). The polypeptide is 2-succinyl-5-enolpyruvyl-6-hydroxy-3-cyclohexene-1-carboxylate synthase (Natronomonas pharaonis (strain ATCC 35678 / DSM 2160 / CIP 103997 / JCM 8858 / NBRC 14720 / NCIMB 2260 / Gabara) (Halobacterium pharaonis)).